We begin with the raw amino-acid sequence, 579 residues long: Carotenoid-cleaving dioxygenase, mitochondrial (579 aa).

H226, H286, H357, and H573 together coordinate Fe cation.

It belongs to the carotenoid oxygenase family. It depends on Fe(2+) as a cofactor. In terms of tissue distribution, highly expressed in retinal pigment epithelium. Also expressed in stomach, small intestine, liver, testis, kidney, adrenal gland, pancreas, heart, skeletal muscle and prostate (at protein level).

It localises to the mitochondrion. The catalysed reaction is all-trans-beta-carotene + O2 = beta-ionone + all-trans-10'-apo-beta-carotenal. The enzyme catalyses 5-cis-lycopene + O2 = 5-cis-10'-apo-lycopenal + (3E,5E)-6,10-dimethylundeca-3,5,9-trien-2-one. It carries out the reaction 13-cis-lycopene + O2 = 13-cis-10'-apo-lycopenal + (3E,5E)-6,10-dimethylundeca-3,5,9-trien-2-one. It catalyses the reaction lutein + O2 = (3R,6R)-hydroxy-alpha-ionone + (3R)-3-hydroxy-10'-apo-beta-carotenal. The catalysed reaction is lutein + O2 = (3R,6R)-3-hydroxy-10'-apo-alpha-carotenal + (3R)-hydroxy-beta-ionone. The enzyme catalyses all-trans-zeaxanthin + 2 O2 = 4,9-dimethyldodeca-2,4,6,8,10-pentaenedial + 2 (3R)-hydroxy-beta-ionone. It carries out the reaction all-trans-zeaxanthin + O2 = (3R)-3-hydroxy-10'-apo-beta-carotenal + (3R)-hydroxy-beta-ionone. It catalyses the reaction beta-cryptoxanthin + O2 = all-trans-10'-apo-beta-carotenal + (3R)-hydroxy-beta-ionone. The catalysed reaction is all-trans-10'-apo-beta-carotenal + O2 = beta-ionone + 4,9-dimethyldodeca-2,4,6,8,10-pentaenedial. The enzyme catalyses (3R)-3-hydroxy-10'-apo-beta-carotenal + O2 = 4,9-dimethyldodeca-2,4,6,8,10-pentaenedial + (3R)-hydroxy-beta-ionone. It carries out the reaction (3R,6R)-3-hydroxy-10'-apo-alpha-carotenal + O2 = (3R,6R)-hydroxy-alpha-ionone + 4,9-dimethyldodeca-2,4,6,8,10-pentaenedial. Broad specificity mitochondrial dioxygenase that mediates the asymmetric oxidative cleavage of carotenoids. Cleaves carotenes (pure hydrocarbon carotenoids) such as all-trans-beta-carotene and lycopene as well as xanthophylls (oxygenated carotenoids) such as zeaxanthin, lutein and beta-cryptoxanthin at both the 9,10 and the 9',10' carbon-carbon double bond. Through its function in carotenoids metabolism regulates oxidative stress and the production of important signaling molecules. The protein is Carotenoid-cleaving dioxygenase, mitochondrial of Homo sapiens (Human).